Consider the following 506-residue polypeptide: WD repeat-containing protein 55 homolog (506 aa).

Residues 1-11 show a composition bias toward basic and acidic residues; that stretch reads MHRHDCFKTPA. Disordered regions lie at residues 1–20, 33–87, and 100–132; these read MHRH…DDID, QEVL…SDDS, and AKRR…DEDD. The segment covering 33 to 48 has biased composition (acidic residues); it reads QEVLNESESDDDEYDL. Residues 61–74 are compositionally biased toward low complexity; it reads GNISSNESISSDGS. Positions 78–87 are enriched in acidic residues; the sequence is NAEDTDSDDS. 6 WD repeats span residues 156-195, 200-239, 243-281, 284-323, 326-365, and 410-449; these read RLED…NKLL, VHAK…LKKL, AHDD…AIFE, EVED…LYVQ, PYEE…YHCD, and QHNM…DFGD. The disordered stretch occupies residues 480–506; it reads DMTKEQDDDDNDDGGNNTTAAGSNNVT. Residues 493 to 506 are compositionally biased toward low complexity; it reads GGNNTTAAGSNNVT.

The protein belongs to the WD repeat WDR55 family.

The sequence is that of WD repeat-containing protein 55 homolog from Drosophila mojavensis (Fruit fly).